A 592-amino-acid polypeptide reads, in one-letter code: Transcription factor MYC3 (592 aa).

Residues 82-141 (STGDNTVILGWGDGYYKGEEDKEKKKNNTNTAEQEHRKRVIRELNSLISGGIGVSDESND) are JAZ-interaction domain. Disordered regions lie at residues 261–313 (ENDP…VENQ), 341–361 (CGNE…NDEG), 393–422 (EPPE…AERQ), and 465–508 (QQAE…STAS). A compositionally biased stretch (low complexity) spans 278–293 (SPARVNNGNNSNSNSK). Residues 294-306 (SDSHQISKLEKND) are compositionally biased toward basic and acidic residues. Residues 352–361 (VSKGSNNDEG) are compositionally biased toward polar residues. Positions 398–407 (KPRKRGRKPA) are enriched in basic residues. Composition is skewed to basic and acidic residues over residues 408 to 422 (NGRE…AERQ) and 468 to 482 (ESDK…DGMS). Residues 411 to 460 (EEPLNHVEAERQRREKLNQRFYSLRAVVPNVSKMDKASLLGDAISYINEL) form the bHLH domain.

In terms of assembly, homo- and heterodimer. Interacts with MYB28, MYB29, MYB34, MYB51, MYB76, MYB122, MYC2, MYC4, AFPH2/NINJA and the JAZ repressors TIFY10A/JAZ1, TIFY10B/JAZ2, TIFY6B/JAZ3, TIFY11A/JAZ5, TIFY11B/JAZ6, TIFY5B/JAZ7, TIFY5A/JAZ8, TIFY7/JAZ9, TIFY9/JAZ10, TIFY3A/JAZ11 and TIFY3B/JAZ12. In terms of tissue distribution, constitutively expressed in roots, stems, leaves, flowers, and seedlings.

It is found in the nucleus. Functionally, transcription factor involved in tryptophan, jasmonic acid (JA) and other stress-responsive gene regulation. With MYC2 and MYC4, controls additively subsets of JA-dependent responses. Can form complexes with all known glucosinolate-related MYBs to regulate glucosinolate biosynthesis. Binds to the G-box (5'-CACGTG-3') of promoters. Activates multiple TIFY/JAZ promoters. In Arabidopsis thaliana (Mouse-ear cress), this protein is Transcription factor MYC3 (MYC3).